The primary structure comprises 307 residues: Ribosomal RNA small subunit methyltransferase H (307 aa).

S-adenosyl-L-methionine contacts are provided by residues 32 to 34 (GGH), Asp-52, Phe-78, Asp-100, and Gln-107.

This sequence belongs to the methyltransferase superfamily. RsmH family.

Its subcellular location is the cytoplasm. The catalysed reaction is cytidine(1402) in 16S rRNA + S-adenosyl-L-methionine = N(4)-methylcytidine(1402) in 16S rRNA + S-adenosyl-L-homocysteine + H(+). Its function is as follows. Specifically methylates the N4 position of cytidine in position 1402 (C1402) of 16S rRNA. The polypeptide is Ribosomal RNA small subunit methyltransferase H (Coxiella burnetii (strain CbuK_Q154) (Coxiella burnetii (strain Q154))).